The primary structure comprises 146 residues: Hemoglobin subunit beta-2 (146 aa).

Residues 2–146 form the Globin domain; that stretch reads HWTAEEKQLV…VAHALAYHYH (145 aa). Positions 63 and 92 each coordinate heme b.

The protein belongs to the globin family. In terms of assembly, there are three forms of hemoglobin in Sphenodon: A, A' and D. Hb A is a tetramer of two alpha-A and two beta-1, Hb A' is a tetramer of two alpha-a and two beta-2, Hb D is a tetramer of two alpha-D and two beta-2.

Functionally, involved in oxygen transport from the lung to the various peripheral tissues. The chain is Hemoglobin subunit beta-2 (HBB2) from Sphenodon punctatus (Tuatara).